A 362-amino-acid polypeptide reads, in one-letter code: MKILVTGGAGFIGSAVVRHIINNTQDSVINVDKLTYAGNLESLTEIENNERYKFEHADICDSVAIANIFAHHQPDAIMHLAAESHVDRSITGPADFIETNIVGTYILLEEARKYWLALSEDRKGAFRFHHISTDEVYGDLPHPDEVSSDTILPLFTEQTSYSPSSPYSASKASSDHLVRAWRRTYGLPTIVTNCSNNYGPYHFPEKLIPLIILNAIAGKLLPVYGNGEQIRDWLYVEDHARALYEVVTKGVPGETYNIGGHNERKNIDVVKTICRILDELIADKPDGIENFEQLIRYVSDRPGHDLRYAIDASKIKQDLGWVPQETFETGITKTIHWYLNNKEWWQRVMDGSYAGERLGLVE.

Residues 11-12 (FI), 32-35 (DKLT), 58-59 (DI), 80-84 (LAAES), and threonine 99 contribute to the NAD(+) site. Serine 84 lines the substrate pocket. Threonine 133 contributes to the substrate binding site. Aspartate 134 (proton donor) is an active-site residue. Catalysis depends on proton acceptor residues glutamate 135 and tyrosine 167. Position 167–171 (167–171 (YSASK)) interacts with NAD(+). Residue asparagine 196 participates in substrate binding. Asparagine 197 contacts NAD(+). Substrate is bound by residues 206 to 207 (KL), 222 to 224 (PVY), arginine 231, asparagine 266, and 300 to 304 (DRPGH).

Belongs to the NAD(P)-dependent epimerase/dehydratase family. dTDP-glucose dehydratase subfamily. NAD(+) is required as a cofactor.

The enzyme catalyses dTDP-alpha-D-glucose = dTDP-4-dehydro-6-deoxy-alpha-D-glucose + H2O. It participates in bacterial outer membrane biogenesis; LPS O-antigen biosynthesis. Functionally, catalyzes the dehydration of dTDP-D-glucose to form dTDP-4-dehydro-6-deoxy-D-glucose via a three-step process involving oxidation, dehydration and reduction. This reaction is a step in the biosynthesis of D-fucofuranose, a component of E.coli O52 O antigen. The polypeptide is dTDP-glucose 4,6-dehydratase (rmlB) (Escherichia coli).